The chain runs to 207 residues: MSTELIAAVEAADSAEGLVRAVAALSAARTDAAIPTLISVLAFNNPGAAVVAVDGLIQLGSPAAQAILNNLDDYNYGARAWALRALAGIGEPAALPLLLSAAREDFSLSVRRAATYGLGRVRWADLSESDRLAQQQQCYETLKLCLQYDPEWVVRYAAAAALETLAPAATQLQSAIAETLNRQAHSDEERAVQARSRLAERRLAAGV.

The protein belongs to the CpcE/RpcE/PecE family. CpcE and CpcF associate to form a lyase.

Its function is as follows. Required for the chromophorylation of the cpcA gene product. This is Phycobilisome maturation protein (cpcF) from Synechococcus elongatus (strain ATCC 33912 / PCC 7942 / FACHB-805) (Anacystis nidulans R2).